The following is a 510-amino-acid chain: 2,3-bisphosphoglycerate-independent phosphoglycerate mutase (510 aa).

2 residues coordinate Mn(2+): Asp-13 and Ser-63. Catalysis depends on Ser-63, which acts as the Phosphoserine intermediate. Substrate-binding positions include His-124, 154-155 (RD), Arg-186, Arg-192, 262-265 (RADR), and Lys-334. Positions 401, 405, 442, 443, and 461 each coordinate Mn(2+).

The protein belongs to the BPG-independent phosphoglycerate mutase family. In terms of assembly, monomer. Requires Mn(2+) as cofactor.

It carries out the reaction (2R)-2-phosphoglycerate = (2R)-3-phosphoglycerate. Its pathway is carbohydrate degradation; glycolysis; pyruvate from D-glyceraldehyde 3-phosphate: step 3/5. Catalyzes the interconversion of 2-phosphoglycerate and 3-phosphoglycerate. The chain is 2,3-bisphosphoglycerate-independent phosphoglycerate mutase from Vibrio parahaemolyticus serotype O3:K6 (strain RIMD 2210633).